Consider the following 270-residue polypeptide: 2-dehydro-3-deoxyphosphooctonate aldolase (270 aa).

This sequence belongs to the KdsA family.

It is found in the cytoplasm. It catalyses the reaction D-arabinose 5-phosphate + phosphoenolpyruvate + H2O = 3-deoxy-alpha-D-manno-2-octulosonate-8-phosphate + phosphate. The protein operates within carbohydrate biosynthesis; 3-deoxy-D-manno-octulosonate biosynthesis; 3-deoxy-D-manno-octulosonate from D-ribulose 5-phosphate: step 2/3. It functions in the pathway bacterial outer membrane biogenesis; lipopolysaccharide biosynthesis. In Helicobacter hepaticus (strain ATCC 51449 / 3B1), this protein is 2-dehydro-3-deoxyphosphooctonate aldolase.